We begin with the raw amino-acid sequence, 124 residues long: UPF0231 protein Sama_0645 (124 aa).

Belongs to the UPF0231 family.

This chain is UPF0231 protein Sama_0645, found in Shewanella amazonensis (strain ATCC BAA-1098 / SB2B).